A 467-amino-acid polypeptide reads, in one-letter code: Asparagine--tRNA ligase (467 aa).

It belongs to the class-II aminoacyl-tRNA synthetase family. In terms of assembly, homodimer.

It localises to the cytoplasm. The enzyme catalyses tRNA(Asn) + L-asparagine + ATP = L-asparaginyl-tRNA(Asn) + AMP + diphosphate + H(+). This chain is Asparagine--tRNA ligase, found in Phocaeicola vulgatus (strain ATCC 8482 / DSM 1447 / JCM 5826 / CCUG 4940 / NBRC 14291 / NCTC 11154) (Bacteroides vulgatus).